A 156-amino-acid chain; its full sequence is Nucleoredoxin-like protein 2 (156 aa).

The Thioredoxin domain occupies 9-147 (RLVTREGTVV…LACFQNWVEA (139 aa)).

It belongs to the nucleoredoxin family. In terms of tissue distribution, both isoforms are expressed in retina, in the photoreceptor layer, and throughout the olfactory sensory neuron layer of the nasal epithelium, in neurons. Also expressed at low levels in brain and testis.

May be involved in the maintenance of both the function and the viability of sensory neurons, including photoreceptors and olfactory neurons. In the retina, isoform 1 may be required for rod function and isoform 2 for cone viability and function. This is Nucleoredoxin-like protein 2 (Nxnl2) from Mus musculus (Mouse).